The sequence spans 147 residues: Ribonuclease 4 (147 aa).

An N-terminal signal peptide occupies residues 1–28 (MDIQRTQSLLLLLLLTLLGLGLVQPSYG). A Pyrrolidone carboxylic acid modification is found at Gln-29. The dUMP site is built by Arg-35, His-40, Lys-68, Asn-71, and Thr-72. Residue His-40 is the Proton acceptor of the active site. Cystine bridges form between Cys-53–Cys-109, Cys-67–Cys-120, Cys-85–Cys-135, and Cys-92–Cys-99. His-144 functions as the Proton donor in the catalytic mechanism. A dUMP-binding site is contributed by Phe-145.

Belongs to the pancreatic ribonuclease family.

The protein localises to the secreted. Cleaves preferentially after uridine bases. Has antimicrobial activity against uropathogenic E.coli (UPEC). Probably contributes to urinary tract sterility. This chain is Ribonuclease 4 (Rnase4), found in Rattus norvegicus (Rat).